The chain runs to 59 residues: Large ribosomal subunit protein bL32 (59 aa).

A disordered region spans residues 1–59 (MAVQQNKKSPSKRGMHRSHDFLTTSPLAVEPSTGEVHLRHHISPNGYYRGKKVVKTKND). The span at 49–59 (RGKKVVKTKND) shows a compositional bias: basic residues.

It belongs to the bacterial ribosomal protein bL32 family.

The polypeptide is Large ribosomal subunit protein bL32 (Burkholderia mallei (strain NCTC 10247)).